A 449-amino-acid chain; its full sequence is Trigger factor (449 aa).

One can recognise a PPIase FKBP-type domain in the interval 172 to 257 (GDEVRFDFKG…IKEITNVKPQ (86 aa)).

It belongs to the FKBP-type PPIase family. Tig subfamily.

The protein localises to the cytoplasm. The enzyme catalyses [protein]-peptidylproline (omega=180) = [protein]-peptidylproline (omega=0). Its function is as follows. Involved in protein export. Acts as a chaperone by maintaining the newly synthesized protein in an open conformation. Functions as a peptidyl-prolyl cis-trans isomerase. The protein is Trigger factor of Ureaplasma parvum serovar 3 (strain ATCC 27815 / 27 / NCTC 11736).